The following is a 408-amino-acid chain: Endo-1,4-beta-xylanase A (408 aa).

An N-terminal signal peptide occupies residues 1–19; sequence MKLSASFAALALLLPFVQA. The 36-residue stretch at 20–55 folds into the CBM1 domain; sequence QSPVWGQCGGIGWTGPTTCTAGNVCQEYSAYYSQCI. The segment at 64-89 is disordered; sequence TSVSTAPNPPPTSHTSTSSAPSGAST. The span at 76–89 shows a compositional bias: low complexity; it reads SHTSTSSAPSGAST. In terms of domain architecture, GH10 spans 88–405; it reads STSTAKLNTL…KPAYDGIAIG (318 aa). The Proton donor role is filled by E222. The active-site Nucleophile is the E327. C355 and C361 are joined by a disulfide.

It belongs to the glycosyl hydrolase 10 (cellulase F) family.

It localises to the secreted. It catalyses the reaction Endohydrolysis of (1-&gt;4)-beta-D-xylosidic linkages in xylans.. It functions in the pathway glycan degradation; xylan degradation. Its function is as follows. Endo-1,4-beta-xylanase involved in the hydrolysis of xylan, a major structural heterogeneous polysaccharide found in plant biomass representing the second most abundant polysaccharide in the biosphere, after cellulose. This chain is Endo-1,4-beta-xylanase A (xynA), found in Phanerodontia chrysosporium (White-rot fungus).